Reading from the N-terminus, the 3677-residue chain is Dystrophin (3677 aa).

The segment at 1-240 (MLWWEEVEDC…YITSLFQVLP (240 aa)) is actin-binding. Calponin-homology (CH) domains follow at residues 15–119 (DVQK…LHWQ) and 134–240 (TNSE…QVLP). The tract at residues 63 to 72 (PKEKGSTRVH) is ANK2- and ANK-3 binding. Spectrin repeat units follow at residues 342 to 447 (LDSY…SNLH), 451 to 557 (MDLQ…LLQD), 560 to 668 (LKWQ…QISQ), 728 to 828 (DITE…NWLE), 831 to 935 (NNII…ELQT), 944 to 1046 (RYQE…KLEE), 1049 to 1154 (NKLR…EALK), 1163 to 1264 (LQKD…TLEE), 1268 to 1464 (CWHE…LFQK), 1469 to 1569 (EQRL…QLEK), 1573 to 1676 (LSRK…NLLL), 1680 to 1777 (KHME…TGKA), 1779 to 1875 (IPLK…KALE), 1878 to 1980 (HQWY…TLHE), 2001 to 2098 (YLTE…ERQG), 2106 to 2209 (KWRH…RVEE), 2215 to 2316 (SEFQ…GELE), 2317 to 2415 (VHIK…LRTK), 2465 to 2569 (ADFN…QLNE), 2576 to 2678 (QWLE…ALEE), 2682 to 2786 (LLQQ…KKSL), 2800 to 2922 (KRLH…RKID), and 2927 to 3032 (RLQE…QLHE). Positions 1416 to 1914 (SDLTSHEISL…PEPRDERKIK (499 aa)) are interaction with SYNM. In terms of domain architecture, WW spans 3047–3080 (TSVQGPWERAISPNKVPYYINHETQTTCWDHPKM). Positions 3050–3400 (QGPWERAISP…TVLEGDNMET (351 aa)) are interaction with SYNM. A ZZ-type; degenerate zinc finger spans residues 3300–3356 (KHQAKCNICKECPIIGFRYRSLKHFNYDICQSCFFSGRVAKGHKMHYPMVEYCTPTT). Cysteine 3305, cysteine 3308, cysteine 3329, and cysteine 3332 together coordinate Zn(2+). The segment at 3458–3510 (DDEHLLIQHYCQSLNQDSPLSQPRSPAQILISLESEERGELERILADLEEENR) is binds to SNTB1. A phosphoserine mark is found at serine 3475, serine 3482, and serine 3492. Disordered regions lie at residues 3520 to 3546 (KQQH…QSPR) and 3595 to 3677 (EAKV…EDTM). 2 stretches are compositionally biased toward polar residues: residues 3599–3618 (NGTT…SSQP) and 3654–3664 (QLNNSFPSSRG). Serine 3604, serine 3605, serine 3609, serine 3615, serine 3616, and serine 3658 each carry phosphoserine.

In terms of assembly, interacts with SYNM. Interacts with the syntrophins SNTG1 and SNTG2. Interacts with KRT19. Component of the dystrophin-associated glycoprotein complex which is composed of three subcomplexes: a cytoplasmic complex comprised of DMD (or UTRN), DTNA and a number of syntrophins, such as SNTB1, SNTB2, SNTG1 and SNTG2, the transmembrane dystroglycan complex, and the sarcoglycan-sarcospan complex. Interacts with DAG1 (betaDAG1) with DMD; the interaction is inhibited by phosphorylation on the PPXY motif of DAG1. Interacts with SYNM; SNTA1 and SNTB1. Interacts with CMYA5. Directly interacts with ANK2 and ANK3; these interactions do not interfere with betaDAG1-binding and are necessary for proper localization in muscle cells. Identified in a dystroglycan complex that contains at least PRX, DRP2, UTRN, DMD and DAG1. Interacts with DTNB. Interacts with PGM5; the interaction is direct. Interacts with NOS1; localizes NOS1 to sarcolemma in muscle cells. Strongly expressed in skeletal muscle and weak expression observed in newborn brain which increases in adult brain.

It is found in the cell membrane. The protein resides in the sarcolemma. Its subcellular location is the cytoplasm. The protein localises to the cytoskeleton. It localises to the postsynaptic cell membrane. Functionally, anchors the extracellular matrix to the cytoskeleton via F-actin. Ligand for dystroglycan. Component of the dystrophin-associated glycoprotein complex which accumulates at the neuromuscular junction (NMJ) and at a variety of synapses in the peripheral and central nervous systems and has a structural function in stabilizing the sarcolemma. Also implicated in signaling events and synaptic transmission. The chain is Dystrophin (Dmd) from Rattus norvegicus (Rat).